A 227-amino-acid chain; its full sequence is MFS-type transporter FVEG_08288 (227 aa).

The chain crosses the membrane as a helical span at residues 8–28; the sequence is VFLTVLIAIASCSVYILNIAI. The N-linked (GlcNAc...) asparagine glycan is linked to N40. 5 helical membrane passes run 43–63, 100–120, 122–142, 164–181, and 188–208; these read TVGL…MAGG, VANT…YYGV, FMVP…HFTL, FVRN…APWM, and YMMT…IWLI.

Belongs to the major facilitator superfamily.

It is found in the membrane. Its function is as follows. MFS-type transporter; part of the Fusarium detoxification of benzoxazolinone cluster 1 (FDB1) involved in the degradation of benzoxazolinones produced by the host plant. Maize, wheat, and rye produce the 2 benzoxazinone phytoanticipins 2,4-dihy-droxy-7-methoxy-1,4-benzoxazin-3-one (DIMBOA) and 2,4-dihydroxy-1,4-benzoxazin-3-one (DIBOA) that, due to their inherent instability once released, spontaneously degrade to the more stable corresponding benzoxazolinones, 6-methoxy-2-benzoxazolinone (MBOA) and 2-benzoxazolinone (BOA), respectively. This is MFS-type transporter FVEG_08288 from Gibberella moniliformis (strain M3125 / FGSC 7600) (Maize ear and stalk rot fungus).